The following is a 319-amino-acid chain: Ribosomal large subunit pseudouridine synthase C (319 aa).

In terms of domain architecture, S4 RNA-binding spans 20–83; it reads QRIDNFLRTQ…AEREEEAVSP (64 aa). The active site involves Asp-144.

This sequence belongs to the pseudouridine synthase RluA family.

It carries out the reaction uridine(955/2504/2580) in 23S rRNA = pseudouridine(955/2504/2580) in 23S rRNA. In terms of biological role, responsible for synthesis of pseudouridine from uracil at positions 955, 2504 and 2580 in 23S ribosomal RNA. This chain is Ribosomal large subunit pseudouridine synthase C (rluC), found in Escherichia coli O157:H7.